The sequence spans 21 residues: Dahlein-5.4 (21 aa).

Expressed by the skin dorsal glands.

The protein localises to the secreted. In terms of biological role, has no antimicrobial activity. Strongly inhibits the formation of NO by neuronal nitric oxide synthase at micromolar concentrations. This Ranoidea dahlii (Dahl's aquatic frog) protein is Dahlein-5.4.